Consider the following 415-residue polypeptide: Zona pellucida-like domain-containing protein 1 (415 aa).

The signal sequence occupies residues 1–19 (MEPIWLLLLLAIFTVSVSA). Residues 20 to 372 (QFNGYNCDAN…QQFQINSVTS (353 aa)) lie on the Extracellular side of the membrane. In terms of domain architecture, ZP spans 43–320 (YCGVQTITMK…PTCHNRDRRD (278 aa)). Intrachain disulfides connect cysteine 44-cysteine 155, cysteine 79-cysteine 104, cysteine 235-cysteine 296, and cysteine 255-cysteine 313. Residues 373-393 (ALISGVVILGATSLSFFIIAL) form a helical membrane-spanning segment. The Cytoplasmic segment spans residues 394–415 (TLLNRKKQNSLVLCGIRNPVFN).

Proteolytically cleaved before the transmembrane segment to yield the secreted form found in the extracellular matrix of the cupula.

Its subcellular location is the cytoplasmic vesicle membrane. It is found in the secreted. The protein resides in the extracellular space. The protein localises to the extracellular matrix. Its function is as follows. Glycoprotein which is a component of the gelatinous extracellular matrix in the cupulae of the vestibular organ. The chain is Zona pellucida-like domain-containing protein 1 (zpld1) from Xenopus laevis (African clawed frog).